We begin with the raw amino-acid sequence, 266 residues long: Protein crossbronx-like (266 aa).

The region spanning 15–178 (KQGYHILAEY…VQEQAILSRN (164 aa)) is the UBC core domain. The tract at residues 226–266 (SEYLGHIDSSRQMDEEETNQLEKLHRGRIPEPQREEAEVSL) is disordered. Residues 245-266 (QLEKLHRGRIPEPQREEAEVSL) show a composition bias toward basic and acidic residues.

The protein belongs to the ubiquitin-conjugating enzyme family. FTS subfamily.

The protein is Protein crossbronx-like of Drosophila sechellia (Fruit fly).